We begin with the raw amino-acid sequence, 427 residues long: 3-phosphoshikimate 1-carboxyvinyltransferase (427 aa).

3 residues coordinate 3-phosphoshikimate: Lys20, Ser21, and Arg25. Lys20 lines the phosphoenolpyruvate pocket. Phosphoenolpyruvate-binding residues include Gly92 and Arg120. Positions 166, 168, 312, and 339 each coordinate 3-phosphoshikimate. Residue Gln168 participates in phosphoenolpyruvate binding. Catalysis depends on Asp312, which acts as the Proton acceptor. 2 residues coordinate phosphoenolpyruvate: Arg343 and Arg385.

It belongs to the EPSP synthase family. Monomer.

It is found in the cytoplasm. It carries out the reaction 3-phosphoshikimate + phosphoenolpyruvate = 5-O-(1-carboxyvinyl)-3-phosphoshikimate + phosphate. Its pathway is metabolic intermediate biosynthesis; chorismate biosynthesis; chorismate from D-erythrose 4-phosphate and phosphoenolpyruvate: step 6/7. Functionally, catalyzes the transfer of the enolpyruvyl moiety of phosphoenolpyruvate (PEP) to the 5-hydroxyl of shikimate-3-phosphate (S3P) to produce enolpyruvyl shikimate-3-phosphate and inorganic phosphate. This chain is 3-phosphoshikimate 1-carboxyvinyltransferase, found in Streptococcus gordonii (strain Challis / ATCC 35105 / BCRC 15272 / CH1 / DL1 / V288).